The primary structure comprises 463 residues: MAALRALCGFRGVAAQVLRPGAGVRLPIQPSRGVRQWQPDVEWAQQFGGAVMYPSKETAHWKPPPWNDVDPPKDTIVKNITLNFGPQHPAAHGVLRLVMELSGEMVRKCDPHIGLLHRGTEKLIEYKTYLQALPYFDRLDYVSMMCNEQAYSLAVEKLLNIRPPPRAQWIRVLFGEITRLLNHIMAVTTHALDLGAMTPFFWLFEEREKMFEFYERVSGARMHAAYIRPGGVHQDLPLGLMDDIYQFSKNFSLRLDELEELLTNNRIWRNRTIDIGVVTAEEALNYGFSGVMLRGSGIQWDLRKTQPYDVYDQVEFDVPVGSRGDCYDRYLCRVEEMRQSLRIIAQCLNKMPPGEIKVDDAKVSPPKRAEMKTSMESLIHHFKLYTEGYQVPPGATYTAIEAPKGEFGVYLVSDGSSRPYRCKIKAPGFAHLAGLDKMSKGHMLADVVAIIGTQDIVFGEVDR.

The N-terminal 33 residues, 1–33 (MAALRALCGFRGVAAQVLRPGAGVRLPIQPSRG), are a transit peptide targeting the mitochondrion. Lys62 carries the N6-acetyllysine modification. Arg118 is subject to Symmetric dimethylarginine. The [4Fe-4S] cluster site is built by Cys326, Cys332, and Cys347.

The protein belongs to the complex I 49 kDa subunit family. Core subunit of respiratory chain NADH dehydrogenase (Complex I) which is composed of 45 different subunits. Component of the iron-sulfur (IP) fragment of the enzyme. Interacts with NDUFAF3. Interacts with NDUFAF7. Interacts with CERS2. It depends on [4Fe-4S] cluster as a cofactor. Post-translationally, dimethylation at Arg-118 by NDUFAF7 takes place after NDUFS2 assembles into the complex I, leading to stabilize the early intermediate complex.

It localises to the mitochondrion inner membrane. The enzyme catalyses a ubiquinone + NADH + 5 H(+)(in) = a ubiquinol + NAD(+) + 4 H(+)(out). In terms of biological role, core subunit of the mitochondrial membrane respiratory chain NADH dehydrogenase (Complex I) which catalyzes electron transfer from NADH through the respiratory chain, using ubiquinone as an electron acceptor. Essential for the catalytic activity of complex I. Essential for the assembly of complex I. Redox-sensitive, critical component of the oxygen-sensing pathway in the pulmonary vasculature which plays a key role in acute pulmonary oxygen-sensing and hypoxic pulmonary vasoconstriction. Plays an important role in carotid body sensing of hypoxia. Essential for glia-like neural stem and progenitor cell proliferation, differentiation and subsequent oligodendrocyte or neuronal maturation. The chain is NADH dehydrogenase [ubiquinone] iron-sulfur protein 2, mitochondrial (NDUFS2) from Homo sapiens (Human).